Consider the following 255-residue polypeptide: MAHLMTVQLLLLVMWMAECAQSRATRARTELLNVCMDAKHHKEKPGPEDNLHDQCSPWKTNSCCSTNTSQEAHKDISYLYRFNWNHCGTMTSECKRHFIQDTCLYECSPNLGPWIQQVDQSWRKERILDVPLCKEDCQQWWEDCQSSFTCKSNWHKGWNWSSGHNECPVGASCHPFTFYFPTSAALCEEIWSHSYKLSNYSRGSGRCIQMWFDPAQGNPNEEVARFYAEAMSGAGFHGTWPLLCSLSLVLLWVIS.

A signal peptide spans 1–24 (MAHLMTVQLLLLVMWMAECAQSRA). Intrachain disulfides connect cysteine 35–cysteine 63, cysteine 55–cysteine 103, cysteine 64–cysteine 107, cysteine 87–cysteine 173, cysteine 94–cysteine 144, cysteine 133–cysteine 207, cysteine 137–cysteine 187, and cysteine 150–cysteine 167. Asparagine 67 carries an N-linked (GlcNAc...) asparagine glycan. Residues aspartate 101, tyrosine 105, 122-126 (WRKER), 155-160 (HKGWNW), and serine 194 contribute to the folate site. An N-linked (GlcNAc...) asparagine glycan is attached at asparagine 159. A glycan (N-linked (GlcNAc...) asparagine) is linked at asparagine 199. Serine 232 carries GPI-anchor amidated serine lipidation. The propeptide at 233-255 (GAGFHGTWPLLCSLSLVLLWVIS) is removed in mature form.

It belongs to the folate receptor family. In terms of processing, the secreted form is derived from the membrane-bound form either by cleavage of the GPI anchor, or/and by proteolysis catalyzed by a metalloprotease. Detected in kidney proximal tubules (at protein level).

It is found in the cell membrane. The protein resides in the apical cell membrane. The protein localises to the basolateral cell membrane. It localises to the secreted. Its subcellular location is the cytoplasmic vesicle. It is found in the clathrin-coated vesicle. The protein resides in the endosome. Binds to folate and reduced folic acid derivatives and mediates delivery of 5-methyltetrahydrofolate and folate analogs into the interior of cells. Has high affinity for folate and folic acid analogs at neutral pH. Exposure to slightly acidic pH after receptor endocytosis triggers a conformation change that strongly reduces its affinity for folates and mediates their release. Required for normal embryonic development and normal cell proliferation. Required for renal folate reabsorption. The chain is Folate receptor alpha (Folr1) from Mus musculus (Mouse).